The chain runs to 152 residues: Ribonuclease H (152 aa).

The 142-residue stretch at 1-142 (MNSKVVIYTD…ADKLAVQGRE (142 aa)) folds into the RNase H type-1 domain. 4 residues coordinate Mg(2+): aspartate 10, glutamate 48, aspartate 70, and aspartate 134.

It belongs to the RNase H family. As to quaternary structure, monomer. Requires Mg(2+) as cofactor.

The protein localises to the cytoplasm. The enzyme catalyses Endonucleolytic cleavage to 5'-phosphomonoester.. In terms of biological role, endonuclease that specifically degrades the RNA of RNA-DNA hybrids. The sequence is that of Ribonuclease H from Rickettsia akari (strain Hartford).